Here is a 479-residue protein sequence, read N- to C-terminus: Aldehyde dehydrogenase family 3 member B2 (479 aa).

Residues E223 and C257 contribute to the active site. A Cysteine methyl ester modification is found at C476. A lipid anchor (S-geranylgeranyl cysteine) is attached at C476. The propeptide at 477-479 (TLL) is removed in mature form.

This sequence belongs to the aldehyde dehydrogenase family. In terms of processing, geranylgeranylation is important for localization to lipid droplets and enzyme activity. Expressed in testis, white adipose tissue, lung, small intestine, kidney, spleen and liver.

The protein localises to the lipid droplet. The enzyme catalyses an aldehyde + NAD(+) + H2O = a carboxylate + NADH + 2 H(+). It carries out the reaction a long-chain fatty aldehyde + NAD(+) + H2O = a long-chain fatty acid + NADH + 2 H(+). It catalyses the reaction a medium-chain fatty aldehyde + NAD(+) + H2O = a medium-chain fatty acid + NADH + 2 H(+). The catalysed reaction is hexadecanoate + NADH + 2 H(+) = hexadecanal + NAD(+) + H2O. The enzyme catalyses octanal + NAD(+) + H2O = octanoate + NADH + 2 H(+). Its pathway is alcohol metabolism; ethanol degradation; acetate from ethanol: step 2/2. Functionally, oxidizes medium and long chain fatty aldehydes in lipid droplets into non-toxic fatty acids. The chain is Aldehyde dehydrogenase family 3 member B2 from Mus musculus (Mouse).